A 61-amino-acid chain; its full sequence is MAKKSLIAKNKRPAKFSTQAYTRCERCGRPHSVYRKFKLCRVCFRQLAHRGQIPGVTKASW.

Residues C24, C27, C40, and C43 each contribute to the Zn(2+) site.

It belongs to the universal ribosomal protein uS14 family. Zinc-binding uS14 subfamily. As to quaternary structure, part of the 30S ribosomal subunit. Contacts proteins S3 and S10. Zn(2+) serves as cofactor.

Functionally, binds 16S rRNA, required for the assembly of 30S particles and may also be responsible for determining the conformation of the 16S rRNA at the A site. The protein is Small ribosomal subunit protein uS14 of Streptococcus thermophilus (strain ATCC BAA-491 / LMD-9).